A 259-amino-acid polypeptide reads, in one-letter code: MGKKDKRWVLQRKKDPYYNLAKRKNYRSRATYKLFQLNEKFNIIKEKNVVVDLGCAPGGWLQAARDMTGEEGFIVGIDLQQIKPLPYENVIAVKGDMTDEETLKKIQDILPEKPDVIICDASPNISGVWDVDHTRSLELTTMALMTATKMLKKGGNFVVKVFQGDLFYKYVELVSEYFDKAFTTKPRASREESAEVYVIAKHYNGKKFNMKSKSDIVKLLKPQDELKREESALSLRKNISDEDTGMIIKKIKQLRAKKD.

G58, W60, D78, D96, and D120 together coordinate S-adenosyl-L-methionine. Catalysis depends on K160, which acts as the Proton acceptor.

Belongs to the class I-like SAM-binding methyltransferase superfamily. RNA methyltransferase RlmE family.

The protein localises to the cytoplasm. The catalysed reaction is uridine(2552) in 23S rRNA + S-adenosyl-L-methionine = 2'-O-methyluridine(2552) in 23S rRNA + S-adenosyl-L-homocysteine + H(+). In terms of biological role, specifically methylates the uridine in position 2552 of 23S rRNA at the 2'-O position of the ribose in the fully assembled 50S ribosomal subunit. The chain is Ribosomal RNA large subunit methyltransferase E from Methanococcus vannielii (strain ATCC 35089 / DSM 1224 / JCM 13029 / OCM 148 / SB).